Consider the following 439-residue polypeptide: Ectonucleotide pyrophosphatase/phosphodiesterase family member 7 (439 aa).

Residues 1–21 (MGHSAVLLCVALAILPACVTG) form the signal peptide. Residues 22-414 (APVQRQHKLL…ILRPMLRSGS (393 aa)) lie on the Extracellular side of the membrane. Zn(2+) is bound by residues Asp-36 and Thr-72. The tract at residues 69-75 (VTMTSPC) is required for enzyme activity. Thr-72 serves as the catalytic Nucleophile. Asn-93 is a binding site for substrate. N-linked (GlcNAc...) asparagine glycans are attached at residues Asn-97, Asn-118, Asn-143, and Asn-165. 4 residues coordinate Zn(2+): Asp-196, His-200, Asp-243, and His-244. Residue Asn-264 is glycosylated (N-linked (GlcNAc...) asparagine). His-350 lines the Zn(2+) pocket. The chain crosses the membrane as a helical span at residues 415–435 (ASLLSSQHHLVALLVGILTCL). Residues 436–439 (AKVL) are Cytoplasmic-facing.

It depends on Zn(2+) as a cofactor. N-glycosylated; required for activity and transport to the plasma membrane. Expressed in liver and small intestine.

The protein localises to the cell membrane. It catalyses the reaction a sphingomyelin + H2O = phosphocholine + an N-acylsphing-4-enine + H(+). It carries out the reaction a 1-O-alkyl-2-acetyl-sn-glycero-3-phosphocholine + H2O = a 1-O-alkyl-2-acetyl-sn-glycerol + phosphocholine + H(+). The catalysed reaction is 1-O-octadecyl-2-acetyl-sn-glycero-3-phosphocholine + H2O = 1-O-octadecyl-2-acetyl-sn-glycerol + phosphocholine + H(+). The enzyme catalyses 1-hexadecanoyl-sn-glycero-3-phosphocholine + H2O = 1-hexadecanoyl-sn-glycerol + phosphocholine + H(+). In terms of biological role, choline-specific phosphodiesterase that hydrolyzes sphingomyelin releasing the ceramide and phosphocholine and therefore is involved in sphingomyelin digestion, ceramide formation, and fatty acid (FA) absorption in the gastrointestinal tract. Also has phospholipase C activity and can also cleave phosphocholine from palmitoyl lyso-phosphatidylcholine and platelet-activating factor (PAF) leading to its inactivation. Does not have nucleotide pyrophosphatase activity. May promote cholesterol absorption by affecting the levels of sphingomyelin derived from either diet or endogenous sources, in the intestinal lumen. The sequence is that of Ectonucleotide pyrophosphatase/phosphodiesterase family member 7 from Mus musculus (Mouse).